Reading from the N-terminus, the 256-residue chain is Tryptophan synthase alpha chain (256 aa).

Active-site proton acceptor residues include glutamate 44 and aspartate 55.

The protein belongs to the TrpA family. As to quaternary structure, tetramer of two alpha and two beta chains.

It catalyses the reaction (1S,2R)-1-C-(indol-3-yl)glycerol 3-phosphate + L-serine = D-glyceraldehyde 3-phosphate + L-tryptophan + H2O. Its pathway is amino-acid biosynthesis; L-tryptophan biosynthesis; L-tryptophan from chorismate: step 5/5. Its function is as follows. The alpha subunit is responsible for the aldol cleavage of indoleglycerol phosphate to indole and glyceraldehyde 3-phosphate. The sequence is that of Tryptophan synthase alpha chain from Coxiella burnetii (strain CbuK_Q154) (Coxiella burnetii (strain Q154)).